The sequence spans 1930 residues: Ankyrin repeat domain-containing protein SAT10 (1930 aa).

ANK repeat units follow at residues 840–872 (FRHTPLGVATAYGDADVIDLLINHDISWWDLEE), 878–908 (GTWNALHHAALGGQRNIMCKLLLQQRKGVLN), 920–949 (SGNTPLILAASRGFHKIVALLLEDGSMRGY), 959–989 (QRSSALLAAARYGFSQTLEMLLTYEGIDYSK), 993–1023 (NGASILHLALVNDREAAALQILAHKDIFSNE), 1073–1102 (SGLTSLTIAIWRNLKSIVEILIAMDADANG), 1106–1135 (EFEAPLVAAAEVGSFELFTMFTKIGATKTE), 1144–1174 (GRTRPLHAACAMGHLEVVRELLKDSVTQLSH), 1178–1205 (NQRTPLCAAISRDQNHVISVLLDRETET), 1206–1235 (GLQEGLWEAARSGKAHILDQLLRRGAEINA), 1239–1268 (YGNTALQWASYYNKPRCVERLLLGGARLDL), 1272–1301 (DNVNALGDAARSGSAEPLKLLVDVGVDVNA), 1304–1333 (GGDTALCRAIWAEEVECVSVLLQGGAKFIL), 1339–1368 (RFENLLTFAVQVSSPEILRLLLKAPEERDL), 1400–1429 (SGWTILHLAAVHGTLAGLTKVLDHATGRAA), 1514–1543 (QNMLASAWMDTERSLKLLGILLEAGVSLTP), 1548–1577 (RHGTALHTAALFSPKPLVEKVIETSRMLAD), 1615–1644 (MGRNAVHLAAAAGARSVLEKIFEVEENEDL), 1651–1680 (DGWTPFHWACRGEDDDCARFLIEKARKIFD), and 1696–1724 (KTWTPLDVARFHQRREVELLLSLGMTTSD).

It participates in mycotoxin biosynthesis. Ankyrin repeat domain-containing protein; part of the satratoxin SC1 cluster involved in the biosynthesis of satratoxins, trichothecene mycotoxins that are associated with human food poisonings. Satratoxins are suggested to be made by products of multiple gene clusters (SC1, SC2 and SC3) that encode 21 proteins in all, including polyketide synthases, acetyltransferases, and other enzymes expected to modify the trichothecene skeleton. SC1 encodes 10 proteins, SAT1 to SAT10. The largest are SAT8, which encodes a putative polyketide synthase (PKS) with a conventional non-reducing architecture, and SAT10, a putative protein containing four ankyrin repeats and thus may be involved in protein scaffolding. The putative short-chain reductase SAT3 may assist the PKS in some capacity. SAT6 contains a secretory lipase domain and acts probably as a trichothecene esterase. SAT5 encodes a putative acetyltransferase, and so, with SAT6, may affect endogenous protection from toxicity. The probable transcription factor SAT9 may regulate the expression of the SC1 cluster. SC2 encodes proteins SAT11 to SAT16, the largest of which encodes the putative reducing PKS SAT13. SAT11 is a cytochrome P450 monooxygenase, while SAT14 and SAT16 are probable acetyltransferases. The SC2 cluster may be regulated by the transcription factor SAT15. SC3 is a small cluster that encodes 5 proteins, SAT17 to SAT21. SAT21 is a putative MFS-type transporter which may have a role in exporting secondary metabolites. The four other proteins putatively encoded in SC3 include the taurine hydroxylase-like protein SAT17, the O-methyltransferase SAT18, the acetyltransferase SAT19, and the Cys6-type zinc finger SAT20, the latter being probably involved in regulation of SC3 expression. In Stachybotrys chartarum (strain CBS 109288 / IBT 7711) (Toxic black mold), this protein is Ankyrin repeat domain-containing protein SAT10.